The primary structure comprises 556 residues: Glutamine--tRNA ligase (556 aa).

The 'HIGH' region signature appears at 34-44; that stretch reads PEPNGYLHIGH. Residues 35 to 37 and 41 to 47 contribute to the ATP site; these read EPN and HIGHAKS. D67 and Y212 together coordinate L-glutamine. ATP is bound by residues T231, 261–262, and 269–271; these read RL and MSK. Residues 268–272 carry the 'KMSKS' region motif; it reads IMSKR.

Belongs to the class-I aminoacyl-tRNA synthetase family. In terms of assembly, monomer.

It is found in the cytoplasm. It catalyses the reaction tRNA(Gln) + L-glutamine + ATP = L-glutaminyl-tRNA(Gln) + AMP + diphosphate. The polypeptide is Glutamine--tRNA ligase (Sodalis glossinidius (strain morsitans)).